We begin with the raw amino-acid sequence, 421 residues long: Leucine-rich repeat-containing protein 42 (421 aa).

LRR repeat units lie at residues 149–170, 174–195, 202–222, 234–255, and 259–280; these read VLCSLCLRNRYLVVAEKLEEIK, ELTRLDLSCCWLGDEHELLEHL, SVTQLHLKDNCLSDAGIRKMT, NLTLLDLSCNPEITDAGIGYLF, and KLNCLDISGTGLKDIKAVKDKL. Residues 374–406 form a disordered region; that stretch reads HEPLLSQESKKSKKRAFEESEQEQSSPQSAKQK. S399 bears the Phosphoserine mark.

Belongs to the LRRC42 family.

This chain is Leucine-rich repeat-containing protein 42 (Lrrc42), found in Rattus norvegicus (Rat).